Here is a 268-residue protein sequence, read N- to C-terminus: Undecaprenyl-diphosphatase (268 aa).

Helical transmembrane passes span 3–23, 46–66, 84–104, 107–127, 144–164, 185–205, 213–233, and 246–266; these read FFNL…EFIP, FEVL…SAKL, LGVL…HGFI, VLFE…FILL, YPLP…IPGV, AEFS…YDLF, FNDG…GVFV, and FALF…ALII.

Belongs to the UppP family.

It localises to the cell inner membrane. The catalysed reaction is di-trans,octa-cis-undecaprenyl diphosphate + H2O = di-trans,octa-cis-undecaprenyl phosphate + phosphate + H(+). Functionally, catalyzes the dephosphorylation of undecaprenyl diphosphate (UPP). Confers resistance to bacitracin. This is Undecaprenyl-diphosphatase from Brucella abortus (strain S19).